Consider the following 348-residue polypeptide: Dihydroorotase (348 aa).

H14 and H16 together coordinate Zn(2+). Residues 16 to 18 (HLR) and N42 contribute to the substrate site. Zn(2+)-binding residues include K100, H137, and H175. N6-carboxylysine is present on K100. H137 contributes to the substrate binding site. L220 is a binding site for substrate. Residue D248 participates in Zn(2+) binding. D248 is an active-site residue. Substrate-binding residues include H252 and A264.

It belongs to the metallo-dependent hydrolases superfamily. DHOase family. Class II DHOase subfamily. Homodimer. The cofactor is Zn(2+).

It catalyses the reaction (S)-dihydroorotate + H2O = N-carbamoyl-L-aspartate + H(+). It functions in the pathway pyrimidine metabolism; UMP biosynthesis via de novo pathway; (S)-dihydroorotate from bicarbonate: step 3/3. Catalyzes the reversible cyclization of carbamoyl aspartate to dihydroorotate. This is Dihydroorotase from Pseudomonas aeruginosa (strain UCBPP-PA14).